We begin with the raw amino-acid sequence, 926 residues long: OTU domain-containing protein 7A (926 aa).

The residue at position 121 (Ser121) is a Phosphoserine. The tract at residues 170–413 (ERDLIEQATM…AVDPGKDWEW (244 aa)) is TRAF-binding. A catalytic region spans residues 185-452 (AGRLNWWSTV…VTWIRIPSET (268 aa)). Residues 201–377 (LLPLATTGDG…QAHFSALVSM (177 aa)) enclose the OTU domain. Residue Asp209 is part of the active site. The active-site Nucleophile is Cys212. The active-site Proton acceptor is His370. Disordered stretches follow at residues 455–517 (PLAQ…DSVA), 540–615 (GLVH…GDAW), and 671–779 (EQEQ…ARQS). Positions 484-494 (VCSNSNSNNGK) are enriched in low complexity. The span at 495-513 (NGKDKEKEKQRKDKDKTRA) shows a compositional bias: basic and acidic residues. A Nuclear localization signal motif is present at residues 497–512 (KDKEKEKQRKDKDKTR). 3 stretches are compositionally biased toward low complexity: residues 579 to 595 (GASA…PSPT), 680 to 691 (AAAAAAATATAT), and 731 to 750 (SPGT…AASP). Over residues 751-767 (GPGGGARRAAPGTGGPT) the composition is skewed to gly residues. Arg880 is modified (omega-N-methylarginine). The segment at 884-919 (GPAQRRCQRENCAFYGRAETEHFCSYCYREELRRRR) adopts an A20-type zinc-finger fold. Zn(2+)-binding residues include Cys890, Cys895, Cys907, and Cys910.

Belongs to the peptidase C64 family.

Its subcellular location is the cytoplasm. It localises to the nucleus. It carries out the reaction Thiol-dependent hydrolysis of ester, thioester, amide, peptide and isopeptide bonds formed by the C-terminal Gly of ubiquitin (a 76-residue protein attached to proteins as an intracellular targeting signal).. In terms of biological role, deubiquitinase, which cleaves 'Lys-11'-linked polyubiquitin chains. This is OTU domain-containing protein 7A (Otud7a) from Mus musculus (Mouse).